A 748-amino-acid chain; its full sequence is Glucans biosynthesis glucosyltransferase H (748 aa).

The next 7 membrane-spanning stretches (helical) occupy residues 85-107 (LIVR…GYGM), 127-149 (FLVL…FVLL), 443-465 (GIGS…LISL), 494-516 (AWVF…LVLI), 529-551 (GRVL…CMMI), 587-606 (LAGP…SVSL), and 608-630 (LLLW…IMTS).

It belongs to the glycosyltransferase 2 family. OpgH subfamily.

It is found in the cell inner membrane. It participates in glycan metabolism; osmoregulated periplasmic glucan (OPG) biosynthesis. Functionally, involved in the biosynthesis of osmoregulated periplasmic glucans (OPGs). The sequence is that of Glucans biosynthesis glucosyltransferase H from Bradyrhizobium diazoefficiens (strain JCM 10833 / BCRC 13528 / IAM 13628 / NBRC 14792 / USDA 110).